Reading from the N-terminus, the 938-residue chain is Isoleucine--tRNA ligase (938 aa).

The short motif at 61-71 is the 'HIGH' region element; sequence PYANGDIHLGT. An L-isoleucyl-5'-AMP-binding site is contributed by E559. A 'KMSKS' region motif is present at residues 601–605; the sequence is KMSKS. An ATP-binding site is contributed by K604. Zn(2+)-binding residues include C904, C907, C923, and C926.

The protein belongs to the class-I aminoacyl-tRNA synthetase family. IleS type 1 subfamily. As to quaternary structure, monomer. Requires Zn(2+) as cofactor.

The protein resides in the cytoplasm. It carries out the reaction tRNA(Ile) + L-isoleucine + ATP = L-isoleucyl-tRNA(Ile) + AMP + diphosphate. Its function is as follows. Catalyzes the attachment of isoleucine to tRNA(Ile). As IleRS can inadvertently accommodate and process structurally similar amino acids such as valine, to avoid such errors it has two additional distinct tRNA(Ile)-dependent editing activities. One activity is designated as 'pretransfer' editing and involves the hydrolysis of activated Val-AMP. The other activity is designated 'posttransfer' editing and involves deacylation of mischarged Val-tRNA(Ile). The chain is Isoleucine--tRNA ligase from Symbiobacterium thermophilum (strain DSM 24528 / JCM 14929 / IAM 14863 / T).